The sequence spans 257 residues: 14-3-3-like protein A (257 aa).

This sequence belongs to the 14-3-3 family.

The protein is 14-3-3-like protein A (GF14A) of Glycine max (Soybean).